Consider the following 245-residue polypeptide: 23S rRNA (guanosine-2'-O-)-methyltransferase RlmB (245 aa).

S-adenosyl-L-methionine-binding residues include Gly-197, Ile-217, and Leu-226.

It belongs to the class IV-like SAM-binding methyltransferase superfamily. RNA methyltransferase TrmH family. RlmB subfamily.

The protein resides in the cytoplasm. It catalyses the reaction guanosine(2251) in 23S rRNA + S-adenosyl-L-methionine = 2'-O-methylguanosine(2251) in 23S rRNA + S-adenosyl-L-homocysteine + H(+). In terms of biological role, specifically methylates the ribose of guanosine 2251 in 23S rRNA. This chain is 23S rRNA (guanosine-2'-O-)-methyltransferase RlmB, found in Photobacterium profundum (strain SS9).